A 689-amino-acid polypeptide reads, in one-letter code: Glycine--tRNA ligase beta subunit (689 aa).

Belongs to the class-II aminoacyl-tRNA synthetase family. Tetramer of two alpha and two beta subunits.

The protein resides in the cytoplasm. It catalyses the reaction tRNA(Gly) + glycine + ATP = glycyl-tRNA(Gly) + AMP + diphosphate. In Dictyoglomus thermophilum (strain ATCC 35947 / DSM 3960 / H-6-12), this protein is Glycine--tRNA ligase beta subunit.